The following is a 379-amino-acid chain: MRVLGLMSGTSADGVDAVLAEFSGSPSEPKWSLLNLVCIPYPEDLRQTVVNAGQGIKLNSCEWLELSESITEVHAQAALACDPRAQAELVGSHGQTVWHRPPQKNHRGASWQILQAPLLAELLKRPVVHDFRAADLALGGQGAPLVPMADAALLGRVGGWRGVLNLGGIANLTLIPPRSGPDRLASVMGWDCGPANSLIDLAVEQISKGKLAFDHDGIIAASGHPHTTTIERWLKETFFQLPPPKSTGREQFGLADLEQRLKELPKMSRANRVATLTAFSAAVVAQDLDNLHLRNLVRPLELIVAGGGSRNPVLMNELRQRCRGMRLLNSDELGLSAEAREGLAFALLAWWHCLQYPGNAPAITGAKRAAVLGVRADPA.

9–16 (GTSADGVD) contacts ATP.

The protein belongs to the anhydro-N-acetylmuramic acid kinase family.

It catalyses the reaction 1,6-anhydro-N-acetyl-beta-muramate + ATP + H2O = N-acetyl-D-muramate 6-phosphate + ADP + H(+). The protein operates within amino-sugar metabolism; 1,6-anhydro-N-acetylmuramate degradation. It participates in cell wall biogenesis; peptidoglycan recycling. Functionally, catalyzes the specific phosphorylation of 1,6-anhydro-N-acetylmuramic acid (anhMurNAc) with the simultaneous cleavage of the 1,6-anhydro ring, generating MurNAc-6-P. Is required for the utilization of anhMurNAc either imported from the medium or derived from its own cell wall murein, and thus plays a role in cell wall recycling. The chain is Anhydro-N-acetylmuramic acid kinase from Prochlorococcus marinus (strain MIT 9313).